The following is a 206-amino-acid chain: Small ribosomal subunit protein uS5 (206 aa).

The tract at residues 1–42 (MENKTEVVVAENANNQTQPERKKFDRKPNRRPQGPKQFQKDD) is disordered. The S5 DRBM domain maps to 43-106 (FEEKVVTIRR…KEAKKNLIRV (64 aa)).

It belongs to the universal ribosomal protein uS5 family. Part of the 30S ribosomal subunit. Contacts proteins S4 and S8.

With S4 and S12 plays an important role in translational accuracy. Functionally, located at the back of the 30S subunit body where it stabilizes the conformation of the head with respect to the body. The protein is Small ribosomal subunit protein uS5 of Mesoplasma florum (strain ATCC 33453 / NBRC 100688 / NCTC 11704 / L1) (Acholeplasma florum).